A 333-amino-acid polypeptide reads, in one-letter code: Adenosine deaminase (333 aa).

The Zn(2+) site is built by histidine 12 and histidine 14. The substrate site is built by histidine 14, aspartate 16, and glycine 170. A Zn(2+)-binding site is contributed by histidine 197. Glutamate 200 serves as the catalytic Proton donor. Residue aspartate 278 coordinates Zn(2+). Aspartate 279 lines the substrate pocket.

This sequence belongs to the metallo-dependent hydrolases superfamily. Adenosine and AMP deaminases family. Adenosine deaminase subfamily. It depends on Zn(2+) as a cofactor.

It catalyses the reaction adenosine + H2O + H(+) = inosine + NH4(+). It carries out the reaction 2'-deoxyadenosine + H2O + H(+) = 2'-deoxyinosine + NH4(+). Its function is as follows. Catalyzes the hydrolytic deamination of adenosine and 2-deoxyadenosine. This Escherichia coli O45:K1 (strain S88 / ExPEC) protein is Adenosine deaminase.